The chain runs to 462 residues: CD-NTase-associated protein 4 (462 aa).

An N-terminal endonuclease domain region spans residues 1-226 (MSASLLEKQS…FENFICHALE (226 aa)). Residues Asp50, Glu67, and Lys69 contribute to the active site. Asp50 serves as a coordination point for Mg(2+). The interval 235-462 (DPIKINLSAS…QYIPTAELNL (228 aa)) is C-terminal SAVED domain. Residues 299–301 (KQR), Trp449, and Tyr454 each bind 2',3',3'-c-tri-AMP.

This sequence belongs to the Cap4 nuclease family. A monomer in the absence of ligand, in its presence it forms oligomers. Requires a divalent metal cation as cofactor.

Its activity is regulated as follows. DNase activity is activated upon ligand binding. Inhibited by EDTA. Effector DNase of a CBASS antivirus system. CBASS (cyclic oligonucleotide-based antiphage signaling system) provides immunity against bacteriophage. The CD-NTase protein synthesizes cyclic nucleotides in response to infection; these serve as specific second messenger signals. The signals activate a diverse range of effectors, leading to bacterial cell death and thus abortive phage infection. A type II-C(AAAA) CBASS system. Its function is as follows. Binds cyclic nucleotide second messengers (synthesized by CdnD, the cognate CD-NTase in the CBASS operon). Ligand binding activates it to endonucleolytically degrade dsDNA to approximately 6 bp length fragments, with a preference for 5'-C or 5'-G cleavage site. The minor product of CdnD is the activating nucleotide; also binds the major product (2',3',3'-cyclic AMP-AMP-AMP) but is not activated by it. Only binds DNA in the presence of ligand. Is not activated by c-di-AMP, c-di-GMP, 3'3'-cyclic GMP-AMP (3'3'-cGAMP) or 3',3',3'-cyclic AMP-AMP-GMP. The sequence is that of CD-NTase-associated protein 4 from Acinetobacter sp. (strain ATCC 27244 / 9458).